The sequence spans 1121 residues: Piwi-like protein ergo-1 (1121 aa).

Positions 1-14 (MSYNNGGGGGGGGY) are enriched in gly residues. The tract at residues 1–134 (MSYNNGGGGG…GNRGGGGGRV (134 aa)) is disordered. Basic and acidic residues-rich tracts occupy residues 15-29 (RNDR…DRQN) and 40-77 (YNDD…DRRG). Residues 99-112 (GSNQRNDNYGNNRG) are compositionally biased toward polar residues. Positions 125–134 (GNRGGGGGRV) are enriched in gly residues. In terms of domain architecture, PAZ spans 426 to 534 (VMTQILTKMT…MPLELVSYIV (109 aa)). The 308-residue stretch at 774–1081 (NVLKYLADNK…AAKRAKETLD (308 aa)) folds into the Piwi domain.

Belongs to the argonaute family. Piwi subfamily. In terms of assembly, interacts with rde-12. Interacts with rde-10. In terms of tissue distribution, highly expressed in the germline in hermaphrodites.

Its subcellular location is the cytoplasm. In terms of biological role, argonaute protein required for gene silencing in the endogenous RNA interference (RNAi) pathway. Involved in the 26G RNAi pathway and associates with both unmethylated and methylated 26G small interfering RNAs (26G-siRNAs), which are a class of 26 nucleotide siRNAs that possess a guanine residue at the 5'-end. Associated 26G-siRNAs are methylated by the methyltransferase henn-1, which stabilizes the siRNAs. Association with 26G-siRNAs is required for the biogenesis of secondary 22G-siRNAs (a class of 22 nucleotide siRNAs that possess a triphosphorylated guanine residue at the 5'-end). May be involved in passenger strand cleavage of target 26G-siRNAs. This Caenorhabditis elegans protein is Piwi-like protein ergo-1.